We begin with the raw amino-acid sequence, 332 residues long: 2,3-diketo-L-gulonate reductase (332 aa).

The active-site Proton donor is the His44. NAD(+) is bound by residues 168-174, 224-225, and 304-306; these read ITMVDMS, WK, and GHE.

The protein belongs to the LDH2/MDH2 oxidoreductase family. DlgD subfamily. Homodimer.

Its subcellular location is the cytoplasm. The catalysed reaction is 3-dehydro-L-gulonate + NAD(+) = 2,3-dioxo-L-gulonate + NADH + H(+). The enzyme catalyses 3-dehydro-L-gulonate + NADP(+) = 2,3-dioxo-L-gulonate + NADPH + H(+). In terms of biological role, catalyzes the reduction of 2,3-diketo-L-gulonate in the presence of NADH, to form 3-keto-L-gulonate. The protein is 2,3-diketo-L-gulonate reductase of Escherichia coli O6:K15:H31 (strain 536 / UPEC).